Here is a 35-residue protein sequence, read N- to C-terminus: Photosystem II reaction center protein M (35 aa).

Residues 5-25 (ILAFVATALFILIPTAFLLIL) traverse the membrane as a helical segment.

The protein belongs to the PsbM family. In terms of assembly, PSII is composed of 1 copy each of membrane proteins PsbA, PsbB, PsbC, PsbD, PsbE, PsbF, PsbH, PsbI, PsbJ, PsbK, PsbL, PsbM, PsbT, PsbX, PsbY, PsbZ, Psb30/Ycf12, at least 3 peripheral proteins of the oxygen-evolving complex and a large number of cofactors. It forms dimeric complexes.

The protein resides in the plastid. It localises to the chloroplast thylakoid membrane. One of the components of the core complex of photosystem II (PSII). PSII is a light-driven water:plastoquinone oxidoreductase that uses light energy to abstract electrons from H(2)O, generating O(2) and a proton gradient subsequently used for ATP formation. It consists of a core antenna complex that captures photons, and an electron transfer chain that converts photonic excitation into a charge separation. This subunit is found at the monomer-monomer interface. The protein is Photosystem II reaction center protein M of Adiantum capillus-veneris (Maidenhair fern).